A 271-amino-acid polypeptide reads, in one-letter code: Phosphate import ATP-binding protein PstB (271 aa).

An ABC transporter domain is found at 25–266 (FDTKNLNLWY…PSDKRTEDYI (242 aa)). An ATP-binding site is contributed by 57-64 (GPSGCGKS).

The protein belongs to the ABC transporter superfamily. Phosphate importer (TC 3.A.1.7) family. As to quaternary structure, the complex is composed of two ATP-binding proteins (PstB), two transmembrane proteins (PstC and PstA) and a solute-binding protein (PstS).

The protein localises to the cell membrane. It carries out the reaction phosphate(out) + ATP + H2O = ADP + 2 phosphate(in) + H(+). In terms of biological role, part of the ABC transporter complex PstSACB involved in phosphate import. Responsible for energy coupling to the transport system. The chain is Phosphate import ATP-binding protein PstB from Bacillus cereus (strain ATCC 14579 / DSM 31 / CCUG 7414 / JCM 2152 / NBRC 15305 / NCIMB 9373 / NCTC 2599 / NRRL B-3711).